We begin with the raw amino-acid sequence, 144 residues long: 3-hydroxyacyl-[acyl-carrier-protein] dehydratase FabZ (144 aa).

Histidine 51 is an active-site residue.

It belongs to the thioester dehydratase family. FabZ subfamily.

It localises to the cytoplasm. The enzyme catalyses a (3R)-hydroxyacyl-[ACP] = a (2E)-enoyl-[ACP] + H2O. Involved in unsaturated fatty acids biosynthesis. Catalyzes the dehydration of short chain beta-hydroxyacyl-ACPs and long chain saturated and unsaturated beta-hydroxyacyl-ACPs. The polypeptide is 3-hydroxyacyl-[acyl-carrier-protein] dehydratase FabZ (Lactococcus lactis subsp. cremoris (strain SK11)).